We begin with the raw amino-acid sequence, 218 residues long: NAD(P)H-quinone oxidoreductase subunit I (218 aa).

2 4Fe-4S ferredoxin-type domains span residues 55–84 (GRIH…VDWV) and 95–124 (RNYS…MTEE). [4Fe-4S] cluster-binding residues include C64, C67, C70, C74, C104, C107, C110, and C114. The disordered stretch occupies residues 169-218 (MDPHDVPANQPRAGQLPAEALKSLSLQQESVQGDEGESLQDASDQDQPSG). Polar residues predominate over residues 208 to 218 (QDASDQDQPSG).

This sequence belongs to the complex I 23 kDa subunit family. NDH-1 is composed of at least 11 different subunits. [4Fe-4S] cluster serves as cofactor.

It is found in the cellular thylakoid membrane. It carries out the reaction a plastoquinone + NADH + (n+1) H(+)(in) = a plastoquinol + NAD(+) + n H(+)(out). The catalysed reaction is a plastoquinone + NADPH + (n+1) H(+)(in) = a plastoquinol + NADP(+) + n H(+)(out). Functionally, NDH-1 shuttles electrons from an unknown electron donor, via FMN and iron-sulfur (Fe-S) centers, to quinones in the respiratory and/or the photosynthetic chain. The immediate electron acceptor for the enzyme in this species is believed to be plastoquinone. Couples the redox reaction to proton translocation, and thus conserves the redox energy in a proton gradient. In Prochlorococcus marinus (strain MIT 9313), this protein is NAD(P)H-quinone oxidoreductase subunit I.